A 429-amino-acid polypeptide reads, in one-letter code: Glutamate-1-semialdehyde 2,1-aminomutase 2 (429 aa).

Lys-268 is modified (N6-(pyridoxal phosphate)lysine).

Belongs to the class-III pyridoxal-phosphate-dependent aminotransferase family. HemL subfamily. Homodimer. Pyridoxal 5'-phosphate serves as cofactor.

Its subcellular location is the cytoplasm. It catalyses the reaction (S)-4-amino-5-oxopentanoate = 5-aminolevulinate. It functions in the pathway porphyrin-containing compound metabolism; protoporphyrin-IX biosynthesis; 5-aminolevulinate from L-glutamyl-tRNA(Glu): step 2/2. This chain is Glutamate-1-semialdehyde 2,1-aminomutase 2, found in Staphylococcus carnosus (strain TM300).